A 332-amino-acid chain; its full sequence is Ribosomal RNA small subunit methyltransferase H (332 aa).

Residues 36–38 (GGY), Asp-54, Phe-81, Asp-102, and Gln-109 each bind S-adenosyl-L-methionine.

This sequence belongs to the methyltransferase superfamily. RsmH family.

It is found in the cytoplasm. The catalysed reaction is cytidine(1402) in 16S rRNA + S-adenosyl-L-methionine = N(4)-methylcytidine(1402) in 16S rRNA + S-adenosyl-L-homocysteine + H(+). In terms of biological role, specifically methylates the N4 position of cytidine in position 1402 (C1402) of 16S rRNA. The chain is Ribosomal RNA small subunit methyltransferase H from Nitrobacter winogradskyi (strain ATCC 25391 / DSM 10237 / CIP 104748 / NCIMB 11846 / Nb-255).